We begin with the raw amino-acid sequence, 111 residues long: Large ribosomal subunit protein uL22 (111 aa).

This sequence belongs to the universal ribosomal protein uL22 family. Part of the 50S ribosomal subunit.

Functionally, this protein binds specifically to 23S rRNA; its binding is stimulated by other ribosomal proteins, e.g. L4, L17, and L20. It is important during the early stages of 50S assembly. It makes multiple contacts with different domains of the 23S rRNA in the assembled 50S subunit and ribosome. Its function is as follows. The globular domain of the protein is located near the polypeptide exit tunnel on the outside of the subunit, while an extended beta-hairpin is found that lines the wall of the exit tunnel in the center of the 70S ribosome. The chain is Large ribosomal subunit protein uL22 from Mycoplasma mycoides subsp. mycoides SC (strain CCUG 32753 / NCTC 10114 / PG1).